Here is a 68-residue protein sequence, read N- to C-terminus: uncharacterized protein (68 aa).

The segment at 1 to 27 (MNEFEKWIEGRYEPHEQKQKEHEDTMG) is disordered.

This is an uncharacterized protein from Bacillus subtilis (strain 168).